Reading from the N-terminus, the 550-residue chain is Chaperonin GroEL (550 aa).

ATP is bound by residues 30–33 (TLGP), lysine 51, 87–91 (DGTTT), glycine 415, and aspartate 497.

This sequence belongs to the chaperonin (HSP60) family. Forms a cylinder of 14 subunits composed of two heptameric rings stacked back-to-back. Interacts with the co-chaperonin GroES.

It is found in the cytoplasm. It carries out the reaction ATP + H2O + a folded polypeptide = ADP + phosphate + an unfolded polypeptide.. Functionally, together with its co-chaperonin GroES, plays an essential role in assisting protein folding. The GroEL-GroES system forms a nano-cage that allows encapsulation of the non-native substrate proteins and provides a physical environment optimized to promote and accelerate protein folding. The polypeptide is Chaperonin GroEL (Yersinia enterocolitica serotype O:8 / biotype 1B (strain NCTC 13174 / 8081)).